We begin with the raw amino-acid sequence, 637 residues long: DNA mismatch repair protein MutL (637 aa).

Disordered stretches follow at residues 352–384 (DDFTSAKPSEDRGSTSSNEENEQRSSIDKNVLF) and 405–430 (ASVEPALEKEPPAAELTAGAKGAMEQ).

This sequence belongs to the DNA mismatch repair MutL/HexB family.

In terms of biological role, this protein is involved in the repair of mismatches in DNA. It is required for dam-dependent methyl-directed DNA mismatch repair. May act as a 'molecular matchmaker', a protein that promotes the formation of a stable complex between two or more DNA-binding proteins in an ATP-dependent manner without itself being part of a final effector complex. The sequence is that of DNA mismatch repair protein MutL from Halalkalibacterium halodurans (strain ATCC BAA-125 / DSM 18197 / FERM 7344 / JCM 9153 / C-125) (Bacillus halodurans).